The sequence spans 147 residues: Large ribosomal subunit protein uL11 (147 aa).

This sequence belongs to the universal ribosomal protein uL11 family. As to quaternary structure, part of the ribosomal stalk of the 50S ribosomal subunit. Interacts with L10 and the large rRNA to form the base of the stalk. L10 forms an elongated spine to which L12 dimers bind in a sequential fashion forming a multimeric L10(L12)X complex. In terms of processing, one or more lysine residues are methylated.

Functionally, forms part of the ribosomal stalk which helps the ribosome interact with GTP-bound translation factors. This chain is Large ribosomal subunit protein uL11, found in Bacteroides thetaiotaomicron (strain ATCC 29148 / DSM 2079 / JCM 5827 / CCUG 10774 / NCTC 10582 / VPI-5482 / E50).